We begin with the raw amino-acid sequence, 302 residues long: Acetylesterase (302 aa).

The first 21 residues, 1–21 (MGRFLTTTALALLATGGAATA), serve as a signal peptide directing secretion. Asparagine 84 and asparagine 101 each carry an N-linked (GlcNAc...) asparagine glycan.

The protein belongs to the carbohydrate esterase CE16 family.

It is found in the secreted. The catalysed reaction is an acetyl ester + H2O = an aliphatic alcohol + acetate + H(+). Its function is as follows. Acetyl esterase that acts as an exo-deacetylase. Liberates acetic acid from xylo-oligomers. This is Acetylesterase from Thermothelomyces thermophilus (Myceliophthora thermophila).